The sequence spans 183 residues: Large ribosomal subunit protein uL22 (183 aa).

Belongs to the universal ribosomal protein uL22 family.

The polypeptide is Large ribosomal subunit protein uL22 (RPL17) (Podocoryna carnea (Hydrozoan)).